We begin with the raw amino-acid sequence, 62 residues long: UPF0291 protein CLK_1994 (62 aa).

This sequence belongs to the UPF0291 family.

Its subcellular location is the cytoplasm. The polypeptide is UPF0291 protein CLK_1994 (Clostridium botulinum (strain Loch Maree / Type A3)).